Here is a 249-residue protein sequence, read N- to C-terminus: Proteasome subunit alpha (249 aa).

Belongs to the peptidase T1A family. The 20S proteasome core is composed of 14 alpha and 14 beta subunits that assemble into four stacked heptameric rings, resulting in a barrel-shaped structure. The two inner rings, each composed of seven catalytic beta subunits, are sandwiched by two outer rings, each composed of seven alpha subunits. The catalytic chamber with the active sites is on the inside of the barrel. Has a gated structure, the ends of the cylinder being occluded by the N-termini of the alpha-subunits. Is capped at one or both ends by the proteasome regulatory ATPase, PAN.

The protein resides in the cytoplasm. With respect to regulation, the formation of the proteasomal ATPase PAN-20S proteasome complex, via the docking of the C-termini of PAN into the intersubunit pockets in the alpha-rings, triggers opening of the gate for substrate entry. Interconversion between the open-gate and close-gate conformations leads to a dynamic regulation of the 20S proteasome proteolysis activity. Its function is as follows. Component of the proteasome core, a large protease complex with broad specificity involved in protein degradation. The sequence is that of Proteasome subunit alpha from Methanosarcina mazei (strain ATCC BAA-159 / DSM 3647 / Goe1 / Go1 / JCM 11833 / OCM 88) (Methanosarcina frisia).